A 124-amino-acid chain; its full sequence is Sulfur globule protein CV2 (124 aa).

Positions 1-22 are cleaved as a signal peptide; that stretch reads MKKLATAAAVAALLGASASASA.

In terms of assembly, the protein envelope of the sulfur globules is composed of the three different proteins CV1, CV2 and CV3.

Functionally, structural protein of the sulfur globules, which are intracellular globules that serve for sulfur storage in purple sulfur bacteria. The protein is Sulfur globule protein CV2 (sgpB) of Allochromatium vinosum (strain ATCC 17899 / DSM 180 / NBRC 103801 / NCIMB 10441 / D) (Chromatium vinosum).